Here is a 116-residue protein sequence, read N- to C-terminus: Large ribosomal subunit protein bL19 (116 aa).

Belongs to the bacterial ribosomal protein bL19 family.

Its function is as follows. This protein is located at the 30S-50S ribosomal subunit interface and may play a role in the structure and function of the aminoacyl-tRNA binding site. The chain is Large ribosomal subunit protein bL19 from Lactobacillus gasseri (strain ATCC 33323 / DSM 20243 / BCRC 14619 / CIP 102991 / JCM 1131 / KCTC 3163 / NCIMB 11718 / NCTC 13722 / AM63).